A 253-amino-acid polypeptide reads, in one-letter code: Solute carrier family 66 member 2 (253 aa).

Transmembrane regions (helical) follow at residues 7-27 (GWLL…AMVF), 49-69 (FSTY…LFWF), 72-92 (HFES…LLML), 125-145 (FADY…ITYL), 150-170 (ALFV…LGVP), and 214-234 (VCGL…YVFT). The PQ-loop 1 domain occupies 14 to 80 (HQLVSWGAAG…RHFESPLLWQ (67 aa)). One can recognise a PQ-loop 2 domain in the interval 160 to 215 (AVLTEAMLGVPQLYRNHRHQSTEGMSIKMVLMWTSGDTFKTAYFLLNGAPLQFSVC).

Its subcellular location is the membrane. This is Solute carrier family 66 member 2 (SLC66A2) from Bos taurus (Bovine).